The primary structure comprises 321 residues: Inner membrane protein YtfF (321 aa).

Over 1–4 (MISG) the chain is Cytoplasmic. A helical membrane pass occupies residues 5–25 (VLYALLAGLMWGLIFVGPLIV). Residues 13-141 (LMWGLIFVGP…IGIGLACVNI (129 aa)) form the EamA domain. Topologically, residues 26 to 30 (PEYPA) are periplasmic. A helical transmembrane segment spans residues 31–51 (MLQSMGRYLALGLIALPIAWL). At 52 to 65 (GRVRLRQLARRDWL) the chain is on the cytoplasmic side. The chain crosses the membrane as a helical span at residues 66-86 (TALMLTMMGNLIYYFCLASAI). Residues 87–92 (QRTGAP) are Periplasmic-facing. Residues 93 to 113 (VSTMIIGTLPVVIPVFANLLY) traverse the membrane as a helical segment. Residues 114–120 (SQRDGKL) are Cytoplasmic-facing. The helical transmembrane segment at 121-141 (AWGKLAPALICIGIGLACVNI) threads the bilayer. Over 142 to 154 (AELNHGLPDFDWA) the chain is Periplasmic. A helical membrane pass occupies residues 155–175 (RYTSGIVLALVSVVCWAWYAL). The Cytoplasmic segment spans residues 176–194 (RNARWLRENPDKHPMMWAT). A helical transmembrane segment spans residues 195–215 (AQALVTLPVSLIGYLVACYWL). The Periplasmic portion of the chain corresponds to 216–230 (NTQTPDFSLPFGPRP). A helical transmembrane segment spans residues 231–251 (LVFISLMVAIAVLCSWVGALC). At 252 to 261 (WNVASQLLPT) the chain is on the cytoplasmic side. Residues 262-282 (VILGPLIVFETLAGLLYTFLL) form a helical membrane-spanning segment. The Periplasmic portion of the chain corresponds to 283 to 285 (RQQ). The helical transmembrane segment at 286-306 (MPPLMTLSGIALLVIGVVIAV) threads the bilayer. Residues 307 to 321 (RAKPEKPLTESVSES) lie on the Cytoplasmic side of the membrane.

The protein localises to the cell inner membrane. The sequence is that of Inner membrane protein YtfF (ytfF) from Escherichia coli (strain K12).